A 142-amino-acid chain; its full sequence is Hemoglobin subunit beta-1 (142 aa).

Positions Ser-2 to His-142 constitute a Globin domain. Heme b is bound by residues His-59 and His-88.

The protein belongs to the globin family. Heterotetramer of two alpha chains and two beta chains. In terms of tissue distribution, red blood cells.

Its function is as follows. Involved in oxygen transport from the lung to the various peripheral tissues. This Torpedo marmorata (Marbled electric ray) protein is Hemoglobin subunit beta-1 (HBB1).